The sequence spans 414 residues: Methyl-CpG-binding domain protein 2 (414 aa).

Residues 1–152 form a required for interaction with DHX9 and PRMT5 region; the sequence is MRAHPGGGRC…GPRATESGKR (152 aa). The segment at 1-163 is disordered; it reads MRAHPGGGRC…DCPALPPGWK (163 aa). Over residues 77 to 95 the composition is skewed to basic residues; sequence GRGRGRGRGRGRGRGRGRG. Positions 98-123 are enriched in gly residues; it reads QSGGSGLGGDGGGGAGGCGGGSGGGV. Residues 148-216 form the MBD domain; that stretch reads ESGKRMDCPA…SSFDFRTGKM (69 aa). The residue at position 184 (S184) is a Phosphoserine. Residues 217–244 are disordered; the sequence is MPSKLQKNKQRLRNDPLNQNKGKPDLNT. Polar residues predominate over residues 232–244; that stretch reads PLNQNKGKPDLNT. A Phosphoserine modification is found at S410.

Heterodimer with MBD3 (via N-terminus). Component of the MeCP1 complex that contains HDAC1 and HDAC2. Component of the nucleosome remodeling and deacetylase (NuRD) repressor complex, composed of core proteins MTA1, MTA2, MTA3, RBBP4, RBBP7, HDAC1, HDAC2, MBD2, MBD3, and peripherally associated proteins CDK2AP1, CDK2AP2, GATAD2A, GATAD2B, CHD3, CHD4 and CHD5. The exact stoichiometry of the NuRD complex is unknown, and some subunits such as MBD2 and MBD3, GATAD2A and GATAD2B, and CHD3, CHD4 and CHD5 define mutually exclusive NuRD complexes. Interacts with CDK2AP1. Interacts with DHX9. Interacts with DNMT1. Interacts with GATAD2A/p66-alpha. Interacts with GATAD2B/p66-beta. Interacts with GPN1. Interacts with MIZF. Interacts with PRMT5. Interacts with SIN3A. Interacts with SPHK2. Highly expressed in brain, heart, kidney, lung, skeletal muscle, spleen and testis. Detected at lower levels in embryonic stem cells.

Its subcellular location is the nucleus. The protein resides in the chromosome. Binds CpG islands in promoters where the DNA is methylated at position 5 of cytosine within CpG dinucleotides. Binds hemimethylated DNA as well. Recruits histone deacetylases and DNA methyltransferases to chromatin. Acts as a component of the histone deacetylase NuRD complex which participates in the remodeling of chromatin. Acts as transcriptional repressor and plays a role in gene silencing. Functions as a scaffold protein, targeting GATAD2A and GATAD2B to chromatin to promote repression. May enhance the activation of some unmethylated cAMP-responsive promoters. Selectively represses transcription activity of methylated rRNA promoters. The sequence is that of Methyl-CpG-binding domain protein 2 from Mus musculus (Mouse).